We begin with the raw amino-acid sequence, 394 residues long: S-adenosylmethionine synthase (394 aa).

Residue Glu10 participates in Mg(2+) binding. His16 serves as a coordination point for ATP. Glu44 lines the K(+) pocket. 2 residues coordinate L-methionine: Glu57 and Gln100. ATP is bound by residues 168–170 (DGK), 236–239 (SGRF), Asp247, 253–254 (RK), Ala270, Lys274, and Lys278. Residue Asp247 coordinates L-methionine. Residue Lys278 coordinates L-methionine.

It belongs to the AdoMet synthase family. Homotetramer. It depends on Mn(2+) as a cofactor. Mg(2+) serves as cofactor. Requires Co(2+) as cofactor. K(+) is required as a cofactor.

The protein localises to the cytoplasm. It catalyses the reaction L-methionine + ATP + H2O = S-adenosyl-L-methionine + phosphate + diphosphate. The protein operates within amino-acid biosynthesis; S-adenosyl-L-methionine biosynthesis; S-adenosyl-L-methionine from L-methionine: step 1/1. Functionally, catalyzes the formation of S-adenosylmethionine from methionine and ATP. The reaction comprises two steps that are both catalyzed by the same enzyme: formation of S-adenosylmethionine (AdoMet) and triphosphate, and subsequent hydrolysis of the triphosphate. This is S-adenosylmethionine synthase (METK) from Medicago truncatula (Barrel medic).